We begin with the raw amino-acid sequence, 107 residues long: Integration host factor subunit alpha (107 aa).

The protein belongs to the bacterial histone-like protein family. In terms of assembly, heterodimer of an alpha and a beta chain.

In terms of biological role, this protein is one of the two subunits of integration host factor, a specific DNA-binding protein that functions in genetic recombination as well as in transcriptional and translational control. The polypeptide is Integration host factor subunit alpha (Brucella suis (strain ATCC 23445 / NCTC 10510)).